Reading from the N-terminus, the 534-residue chain is MPNVFQNLVSCKRVFRELKMAAYNGGTSAAAAGHHHHHHHHLPHLPPPHLHHHHHPQHHLHPGSAAAVHPVQQHTSSAAAAAAAAAAAAAMLNPGQQQPYFPSPAPGQAPGPAAAAPAQVQAAAAATVKAHHHQHSHHPQQQLDIEPDRPIGYGAFGVVWSVTDPRDGKRVALKKMPNVFQNLVSCKRVFRELKMLCFFKHDNVLSALDILQPPHIDYFEEIYVVTELMQSDLHKIIVSPQPLSSDHVKVFLYQILRGLKYLHSAGILHRDIKPGNLLVNSNCVLKICDFGLARVEELDESRHMTQEVVTQYYRAPEILMGSRHYSNAIDIWSVGCIFAELLGRRILFQAQSPIQQLDLITDLLGTPSLEAMRTACEGAKAHILRGPHKQPSLPVLYTLSSQATHEAVHLLCRMLVFDPSKRISAKDALAHPYLDEGRLRYHTCMCKCCFSTSTGRVYTSDFEPVTNPKFDDTFEKNLSSVRQVKEIIHQFILEQQKGNRVPLCINPQSAAFKSFISSTVAQPSEMPPSPLVWE.

Sufficient for interaction with DAPK3 regions lie at residues 8–132 and 131–423; these read LVSC…KAHH and HHHQ…SKRI. 2 required for interaction with TAB2 regions span residues 8–311 and 441–534; these read LVSC…VVTQ and YHTC…LVWE. Disordered stretches follow at residues 29-79 and 97-147; these read AAAA…SSAA and QQPY…DIEP. The segment covering 33–61 has biased composition (basic residues); the sequence is GHHHHHHHHLPHLPPPHLHHHHHPQHHLH. Positions 110-126 are enriched in low complexity; it reads PGPAAAAPAQVQAAAAA. The span at 129–138 shows a compositional bias: basic residues; sequence KAHHHQHSHH. The Protein kinase domain occupies 145–434; the sequence is IEPDRPIGYG…AKDALAHPYL (290 aa). ATP contacts are provided by residues 151-159 and Lys174; that span reads IGYGAFGVV. The active-site Proton acceptor is the Asp271. Thr305 is subject to Phosphothreonine; by autocatalysis. The TQE motif lies at 305 to 307; sequence TQE. The interval 435-534 is required for homodimerization and kinase activation and localization to the nucleus; it reads DEGRLRYHTC…EMPPSPLVWE (100 aa). Phosphoserine is present on Ser529.

This sequence belongs to the protein kinase superfamily. CMGC Ser/Thr protein kinase family. MAP kinase subfamily. As to quaternary structure, homodimer. Homodimerization is required for intermolecular autophosphorylation, kinase activation and nuclear localization. May interact with components of cullin-RING-based SCF (SKP1-CUL1-F-box protein) E3 ubiquitin-protein ligase complexes. Interacts with LEF1, MEF2A, MYBL1 and MYBL2. Interacts with the upstream activating kinases HIPK2 and MAP3K7/TAK1. Interaction with MAP3K7/TAK1 seems to be indirect, and may be mediated by other proteins such as STAT3, TAB1 and TAB2. Interacts with and phosphorylates a number of transcription factors including FOXO1, FOXO3, FOXO4, MYB, NOTCH1 and TCF7L2/TCF4. Interacts with DAPK3/ZIPK, and this interaction may disrupt interaction with transcription factors such as TCF7L2/TCF4. Forms a transcriptional repressor complex with CHD7, PPARG and SETDB1. Interacts with RNF138/NARF. Interacts with ATF5; the interaction stabilizes ATF5 at the protein level in a kinase-independent manner. Requires Mg(2+) as cofactor. Post-translationally, phosphorylated on Thr-305. Intermolecular autophosphorylation on Thr-305 activates the enzyme.

The protein localises to the nucleus. It is found in the cytoplasm. The enzyme catalyses L-seryl-[protein] + ATP = O-phospho-L-seryl-[protein] + ADP + H(+). It catalyses the reaction L-threonyl-[protein] + ATP = O-phospho-L-threonyl-[protein] + ADP + H(+). Its activity is regulated as follows. Activated by the non-canonical Wnt signaling pathway, in which WNT5A leads to activation of MAP3K7/TAK1 and HIPK2, which subsequently phosphorylates and activates this protein. Activated by dimerization and subsequent intermolecular autophosphorylation on Thr-305. Other cytokines such as IL6 may also activate this regulatory circuit. Its function is as follows. Serine/threonine-protein kinase that regulates a number of transcription factors with key roles in cell fate determination. Positive effector of the non-canonical Wnt signaling pathway, acting downstream of WNT5A, MAP3K7/TAK1 and HIPK2. Negative regulator of the canonical Wnt/beta-catenin signaling pathway. Binds to and phosphorylates TCF7L2/TCF4 and LEF1, promoting the dissociation of the TCF7L2/LEF1/beta-catenin complex from DNA, as well as the ubiquitination and subsequent proteolysis of LEF1. Together these effects inhibit the transcriptional activation of canonical Wnt/beta-catenin target genes. Negative regulator of the Notch signaling pathway. Binds to and phosphorylates NOTCH1, thereby preventing the formation of a transcriptionally active ternary complex of NOTCH1, RBPJ/RBPSUH and MAML1. Negative regulator of the MYB family of transcription factors. Phosphorylation of MYB leads to its subsequent proteolysis while phosphorylation of MYBL1 and MYBL2 inhibits their interaction with the coactivator CREBBP. Other transcription factors may also be inhibited by direct phosphorylation of CREBBP itself. Acts downstream of IL6 and MAP3K7/TAK1 to phosphorylate STAT3, which is in turn required for activation of NLK by MAP3K7/TAK1. Upon IL1B stimulus, cooperates with ATF5 to activate the transactivation activity of C/EBP subfamily members. Phosphorylates ATF5 but also stabilizes ATF5 protein levels in a kinase-independent manner. Acts as an inhibitor of the mTORC1 complex in response to osmotic stress by mediating phosphorylation of RPTOR, thereby preventing recruitment of the mTORC1 complex to lysosomes. The chain is Serine/threonine-protein kinase NLK (NLK) from Bos taurus (Bovine).